The primary structure comprises 152 residues: Phosphoribosyl-AMP cyclohydrolase (152 aa).

Mg(2+) is bound at residue D92. C93 contacts Zn(2+). 2 residues coordinate Mg(2+): D94 and D96. Zn(2+) is bound by residues C111 and C118.

The protein belongs to the PRA-CH family. As to quaternary structure, homodimer. Requires Mg(2+) as cofactor. It depends on Zn(2+) as a cofactor.

It localises to the cytoplasm. It carries out the reaction 1-(5-phospho-beta-D-ribosyl)-5'-AMP + H2O = 1-(5-phospho-beta-D-ribosyl)-5-[(5-phospho-beta-D-ribosylamino)methylideneamino]imidazole-4-carboxamide. Its pathway is amino-acid biosynthesis; L-histidine biosynthesis; L-histidine from 5-phospho-alpha-D-ribose 1-diphosphate: step 3/9. Functionally, catalyzes the hydrolysis of the adenine ring of phosphoribosyl-AMP. The protein is Phosphoribosyl-AMP cyclohydrolase of Sinorhizobium fredii (strain NBRC 101917 / NGR234).